Consider the following 369-residue polypeptide: 3 beta-hydroxysteroid dehydrogenase type 7 (369 aa).

Tyr159 serves as the catalytic Proton acceptor. An NAD(+)-binding site is contributed by Lys163. Helical transmembrane passes span 289 to 309 (LLPY…QWLL) and 312 to 334 (LVLY…FTVS).

This sequence belongs to the 3-beta-HSD family. Predominantly expressed in liver.

The protein localises to the endoplasmic reticulum membrane. It catalyses the reaction 7alpha-hydroxycholesterol + NAD(+) = 7alpha-hydroxycholest-4-en-3-one + NADH + H(+). The enzyme catalyses 7alpha,25-dihydroxycholesterol + NAD(+) = 7alpha,25-dihydroxy-4-cholesten-3-one + NADH + H(+). The catalysed reaction is (25R)-cholest-5-en-3beta,7alpha,26-triol + NAD(+) = (25R)-7alpha,26-dihydroxycholest-4-en-3-one + NADH + H(+). It carries out the reaction (24S)-7alpha-dihydroxycholesterol + NAD(+) = (24S)-7alpha,24-dihydroxycholest-4-en-3-one + NADH + H(+). The protein operates within lipid metabolism; steroid biosynthesis. In terms of biological role, the 3-beta-HSD enzymatic system plays a crucial role in the biosynthesis of all classes of hormonal steroids. HSD VII is active against four 7-alpha-hydroxylated sterols. Does not metabolize several different C(19/21) steroids as substrates. Involved in bile acid synthesis. Plays a key role in cell positioning and movement in lymphoid tissues by mediating degradation of 7-alpha,25-dihydroxycholesterol (7-alpha,25-OHC): 7-alpha,25-OHC acts as a ligand for the G protein-coupled receptor GPR183/EBI2, a chemotactic receptor for a number of lymphoid cells. The protein is 3 beta-hydroxysteroid dehydrogenase type 7 of Mus musculus (Mouse).